The primary structure comprises 766 residues: Serine/threonine-protein kinase PLK4 (766 aa).

The region spanning Y14 to M267 is the Protein kinase domain. ATP-binding positions include L20–V28 and K43. The Proton acceptor role is filled by D138. A Cryptic POLO box 1 (CPB1) domain is found at E379–K496. The Cryptic POLO box 2 (CPB2) domain maps to T497 to P600. One can recognise a POLO box domain in the interval P658–T737.

It belongs to the protein kinase superfamily. Ser/Thr protein kinase family. CDC5/Polo subfamily. As to quaternary structure, homodimer. Post-translationally, ubiquitinated by the SCF(Slimb) ubiquitin ligase complex; leading to its degradation by the proteasome during interphase and regulating centriole number and ensuring the block to centriole reduplication.

The protein resides in the cytoplasm. The protein localises to the cytoskeleton. Its subcellular location is the microtubule organizing center. It localises to the centrosome. It is found in the centriole. The enzyme catalyses L-seryl-[protein] + ATP = O-phospho-L-seryl-[protein] + ADP + H(+). It catalyses the reaction L-threonyl-[protein] + ATP = O-phospho-L-threonyl-[protein] + ADP + H(+). Its function is as follows. Serine/threonine-protein kinase that plays a central role in centriole duplication. Able to trigger procentriole formation on the surface of the mother centriole cylinder, using mother centriole as a platform, leading to the recruitment of centriole biogenesis proteins such as sas-6. When overexpressed, it is able to induce centrosome amplification through the simultaneous generation of multiple procentrioles adjoining each parental centriole during S phase. Centrosome amplification following overexpression can initiate tumorigenesis, highlighting the importance of centrosome regulation in cancers. This chain is Serine/threonine-protein kinase PLK4 (SAK), found in Drosophila yakuba (Fruit fly).